Here is a 314-residue protein sequence, read N- to C-terminus: 2,3-dihydroxyphenylpropionate/2,3-dihydroxicinnamic acid 1,2-dioxygenase (314 aa).

His-115 (proton donor) is an active-site residue. His-179 serves as the catalytic Proton acceptor.

This sequence belongs to the LigB/MhpB extradiol dioxygenase family. In terms of assembly, homotetramer. Fe(2+) is required as a cofactor.

It catalyses the reaction 3-(2,3-dihydroxyphenyl)propanoate + O2 = (2Z,4E)-2-hydroxy-6-oxonona-2,4-dienedioate + H(+). The catalysed reaction is (2E)-3-(2,3-dihydroxyphenyl)prop-2-enoate + O2 = (2Z,4E,7E)-2-hydroxy-6-oxonona-2,4,7-trienedioate + H(+). It participates in aromatic compound metabolism; 3-phenylpropanoate degradation. Its function is as follows. Catalyzes the non-heme iron(II)-dependent oxidative cleavage of 2,3-dihydroxyphenylpropionic acid and 2,3-dihydroxicinnamic acid into 2-hydroxy-6-ketononadienedioate and 2-hydroxy-6-ketononatrienedioate, respectively. The protein is 2,3-dihydroxyphenylpropionate/2,3-dihydroxicinnamic acid 1,2-dioxygenase of Klebsiella pneumoniae subsp. pneumoniae (strain ATCC 700721 / MGH 78578).